Reading from the N-terminus, the 247-residue chain is ATP synthase subunit a, chloroplastic (247 aa).

5 helical membrane-spanning segments follow: residues 38 to 58 (QVLI…TLAV), 95 to 115 (VPFI…GALL), 134 to 154 (INTT…AGLS), 199 to 219 (LVVV…VMFL), and 220 to 240 (GLFT…AYIG).

The protein belongs to the ATPase A chain family. F-type ATPases have 2 components, CF(1) - the catalytic core - and CF(0) - the membrane proton channel. CF(1) has five subunits: alpha(3), beta(3), gamma(1), delta(1), epsilon(1). CF(0) has four main subunits: a, b, b' and c.

It localises to the plastid. It is found in the chloroplast thylakoid membrane. In terms of biological role, key component of the proton channel; it plays a direct role in the translocation of protons across the membrane. In Lactuca sativa (Garden lettuce), this protein is ATP synthase subunit a, chloroplastic.